Here is a 439-residue protein sequence, read N- to C-terminus: D-inositol 3-phosphate glycosyltransferase (439 aa).

Histidine 21 is a binding site for 1D-myo-inositol 3-phosphate. Residues 27-28 and glycine 35 contribute to the UDP-N-acetyl-alpha-D-glucosamine site; that span reads QP. Residues 32-37, lysine 90, tyrosine 123, threonine 147, and arginine 167 contribute to the 1D-myo-inositol 3-phosphate site; that span reads DAGGMN. Residues arginine 241, lysine 246, and glutamine 299 each contribute to the UDP-N-acetyl-alpha-D-glucosamine site. Positions 308, 309, and 311 each coordinate Mg(2+). The UDP-N-acetyl-alpha-D-glucosamine site is built by glutamate 321 and glutamate 329. Threonine 335 contributes to the Mg(2+) binding site.

Belongs to the glycosyltransferase group 1 family. MshA subfamily. In terms of assembly, homodimer.

It carries out the reaction 1D-myo-inositol 3-phosphate + UDP-N-acetyl-alpha-D-glucosamine = 1D-myo-inositol 2-acetamido-2-deoxy-alpha-D-glucopyranoside 3-phosphate + UDP + H(+). In terms of biological role, catalyzes the transfer of a N-acetyl-glucosamine moiety to 1D-myo-inositol 3-phosphate to produce 1D-myo-inositol 2-acetamido-2-deoxy-glucopyranoside 3-phosphate in the mycothiol biosynthesis pathway. The protein is D-inositol 3-phosphate glycosyltransferase of Mycobacterium sp. (strain JLS).